The chain runs to 361 residues: Phospho-N-acetylmuramoyl-pentapeptide-transferase (361 aa).

A run of 10 helical transmembrane segments spans residues 25–45, 73–93, 97–117, 134–154, 168–188, 200–220, 237–257, 264–284, 289–309, and 338–358; these read RAVL…PAVI, TMGG…WADL, YVWL…VDDW, YFWQ…TASL, ATFG…IVGA, GLAI…AYVA, AGEL…FLWF, VFMG…VAVV, IILF…MIQV, and QVVV…LSSL.

This sequence belongs to the glycosyltransferase 4 family. MraY subfamily. Mg(2+) serves as cofactor.

It localises to the cell inner membrane. It carries out the reaction UDP-N-acetyl-alpha-D-muramoyl-L-alanyl-gamma-D-glutamyl-meso-2,6-diaminopimeloyl-D-alanyl-D-alanine + di-trans,octa-cis-undecaprenyl phosphate = di-trans,octa-cis-undecaprenyl diphospho-N-acetyl-alpha-D-muramoyl-L-alanyl-D-glutamyl-meso-2,6-diaminopimeloyl-D-alanyl-D-alanine + UMP. It functions in the pathway cell wall biogenesis; peptidoglycan biosynthesis. In terms of biological role, catalyzes the initial step of the lipid cycle reactions in the biosynthesis of the cell wall peptidoglycan: transfers peptidoglycan precursor phospho-MurNAc-pentapeptide from UDP-MurNAc-pentapeptide onto the lipid carrier undecaprenyl phosphate, yielding undecaprenyl-pyrophosphoryl-MurNAc-pentapeptide, known as lipid I. The sequence is that of Phospho-N-acetylmuramoyl-pentapeptide-transferase from Thiobacillus denitrificans (strain ATCC 25259 / T1).